A 260-amino-acid polypeptide reads, in one-letter code: tRNA pseudouridine synthase C (260 aa).

Asp-54 is a catalytic residue.

Belongs to the pseudouridine synthase RluA family.

The enzyme catalyses uridine(65) in tRNA = pseudouridine(65) in tRNA. Responsible for synthesis of pseudouridine from uracil-65 in transfer RNAs. The polypeptide is tRNA pseudouridine synthase C (truC) (Escherichia coli O6:H1 (strain CFT073 / ATCC 700928 / UPEC)).